The following is a 412-amino-acid chain: Probable beta-1,4-xylosyltransferase IRX10 (412 aa).

A helical; Signal-anchor for type II membrane protein membrane pass occupies residues 1 to 21; that stretch reads MKIHSCLSAILLFLFFSASSA. The Lumenal segment spans residues 22-412; sequence KQNVRTERIS…AGPVADLKPW (391 aa). Residues asparagine 139 and asparagine 400 are each glycosylated (N-linked (GlcNAc...) asparagine).

Belongs to the glycosyltransferase 47 family. Limited to xylem cells. Expressed in the root tip, xylem cells of roots, and in the vasculature of roots, cotyledons and leaves.

Its subcellular location is the golgi apparatus membrane. Its function is as follows. Involved in the synthesis of the hemicellulose glucuronoxylan, a major component of secondary cell walls. Probably involved in the elongation of glucuronoxylan xylosyl backbone, especially in the formation of GlcUA side chain of xylans. This is Probable beta-1,4-xylosyltransferase IRX10 (IRX10) from Arabidopsis thaliana (Mouse-ear cress).